Here is a 78-residue protein sequence, read N- to C-terminus: DNA gyrase inhibitor YacG (78 aa).

Positions 7, 10, 26, and 30 each coordinate Zn(2+).

Belongs to the DNA gyrase inhibitor YacG family. In terms of assembly, interacts with GyrB. The cofactor is Zn(2+).

Inhibits all the catalytic activities of DNA gyrase by preventing its interaction with DNA. Acts by binding directly to the C-terminal domain of GyrB, which probably disrupts DNA binding by the gyrase. The chain is DNA gyrase inhibitor YacG from Colwellia psychrerythraea (strain 34H / ATCC BAA-681) (Vibrio psychroerythus).